The chain runs to 187 residues: MILVDWQIEDRIRRGHIRVDPFEPGLIQPNSLDIRLGSHFVWYVPGETVIDPYDSETVCRDTEEMVADSIVLAPGRFLLAETLEAIELPDDIVASIEGKSSIARLGVELHQTGGWIDAGFRGTITLEMCNVNSRPVKVYAGMPIGQLVFYRTDRAARPYNMKQDAKYMDQQQATLSRYHENARRAEE.

DCTP-binding positions include 99–104, aspartate 117, 125–127, glutamine 146, tyrosine 159, lysine 166, and glutamine 170; these read KSSIAR and TLE. The Proton donor/acceptor role is filled by glutamate 127.

The protein belongs to the dCTP deaminase family. As to quaternary structure, homotrimer.

The enzyme catalyses dCTP + 2 H2O = dUMP + NH4(+) + diphosphate. It participates in pyrimidine metabolism; dUMP biosynthesis; dUMP from dCTP: step 1/1. Functionally, bifunctional enzyme that catalyzes both the deamination of dCTP to dUTP and the hydrolysis of dUTP to dUMP without releasing the toxic dUTP intermediate. The protein is dCTP deaminase, dUMP-forming of Methanoculleus marisnigri (strain ATCC 35101 / DSM 1498 / JR1).